Reading from the N-terminus, the 252-residue chain is Methylthioribulose-1-phosphate dehydratase (252 aa).

Residue Cys105 participates in substrate binding. Residues His123 and His125 each coordinate Zn(2+). The Proton donor/acceptor role is filled by Glu151. His208 provides a ligand contact to Zn(2+).

This sequence belongs to the aldolase class II family. MtnB subfamily. Requires Zn(2+) as cofactor.

The protein resides in the cytoplasm. It carries out the reaction 5-(methylsulfanyl)-D-ribulose 1-phosphate = 5-methylsulfanyl-2,3-dioxopentyl phosphate + H2O. It participates in amino-acid biosynthesis; L-methionine biosynthesis via salvage pathway; L-methionine from S-methyl-5-thio-alpha-D-ribose 1-phosphate: step 2/6. Catalyzes the dehydration of methylthioribulose-1-phosphate (MTRu-1-P) into 2,3-diketo-5-methylthiopentyl-1-phosphate (DK-MTP-1-P). The protein is Methylthioribulose-1-phosphate dehydratase of Sclerotinia sclerotiorum (strain ATCC 18683 / 1980 / Ss-1) (White mold).